The chain runs to 610 residues: Elongation factor 4 (610 aa).

Residues 11–193 (ENIRNFSIIA…QIVEKVPAPS (183 aa)) form the tr-type G domain. GTP contacts are provided by residues 23–28 (DHGKST) and 140–143 (NKID).

The protein belongs to the TRAFAC class translation factor GTPase superfamily. Classic translation factor GTPase family. LepA subfamily.

It localises to the cell membrane. It carries out the reaction GTP + H2O = GDP + phosphate + H(+). Functionally, required for accurate and efficient protein synthesis under certain stress conditions. May act as a fidelity factor of the translation reaction, by catalyzing a one-codon backward translocation of tRNAs on improperly translocated ribosomes. Back-translocation proceeds from a post-translocation (POST) complex to a pre-translocation (PRE) complex, thus giving elongation factor G a second chance to translocate the tRNAs correctly. Binds to ribosomes in a GTP-dependent manner. The protein is Elongation factor 4 of Streptococcus equi subsp. equi (strain 4047).